A 425-amino-acid chain; its full sequence is Actin-related protein 3 (425 aa).

The protein belongs to the actin family. ARP3 subfamily. In terms of assembly, component of the Arp2/3 complex, at least composed of arx-1, arx-2, arx-4 and arx-6.

Its subcellular location is the cytoplasm. It is found in the cytoskeleton. Functions as ATP-binding component of the Arp2/3 complex which is involved in regulation of actin polymerization and together with an activating nucleation-promoting factor (NPF) mediates the formation of branched actin networks. Seems to contact the pointed end of the daughter actin filament. Plays a role in time-dependent memory loss and the retention of conditioned behavior over time. This is Actin-related protein 3 from Caenorhabditis elegans.